A 411-amino-acid chain; its full sequence is LL-diaminopimelate aminotransferase (411 aa).

Residues Tyr-15 and Gly-42 each contribute to the substrate site. Residues Tyr-72, 108-109 (SK), Tyr-132, Asn-187, Tyr-218, and 246-248 (SFS) contribute to the pyridoxal 5'-phosphate site. Substrate contacts are provided by Lys-109, Tyr-132, and Asn-187. At Lys-249 the chain carries N6-(pyridoxal phosphate)lysine. Arg-257 and Asn-292 together coordinate pyridoxal 5'-phosphate. Asn-292 and Arg-388 together coordinate substrate.

This sequence belongs to the class-I pyridoxal-phosphate-dependent aminotransferase family. LL-diaminopimelate aminotransferase subfamily. Homodimer. Pyridoxal 5'-phosphate is required as a cofactor.

The enzyme catalyses (2S,6S)-2,6-diaminopimelate + 2-oxoglutarate = (S)-2,3,4,5-tetrahydrodipicolinate + L-glutamate + H2O + H(+). It functions in the pathway amino-acid biosynthesis; L-lysine biosynthesis via DAP pathway; LL-2,6-diaminopimelate from (S)-tetrahydrodipicolinate (aminotransferase route): step 1/1. Its function is as follows. Involved in the synthesis of meso-diaminopimelate (m-DAP or DL-DAP), required for both lysine and peptidoglycan biosynthesis. Catalyzes the direct conversion of tetrahydrodipicolinate to LL-diaminopimelate. The protein is LL-diaminopimelate aminotransferase of Citrifermentans bemidjiense (strain ATCC BAA-1014 / DSM 16622 / JCM 12645 / Bem) (Geobacter bemidjiensis).